Reading from the N-terminus, the 302-residue chain is Oxygen-dependent coproporphyrinogen-III oxidase (302 aa).

Position 94 (Ser94) interacts with substrate. A divalent metal cation is bound by residues His98 and His108. His108 serves as the catalytic Proton donor. Substrate is bound at residue 110–112 (NVR). A divalent metal cation-binding residues include His147 and His177. The tract at residues 242 to 277 (YVEFNLVFDRGTLFGLQSGGRTESILMSMPPVANWR) is important for dimerization. Substrate is bound at residue 260–262 (GGR).

This sequence belongs to the aerobic coproporphyrinogen-III oxidase family. In terms of assembly, homodimer. The cofactor is a divalent metal cation.

It is found in the cytoplasm. The catalysed reaction is coproporphyrinogen III + O2 + 2 H(+) = protoporphyrinogen IX + 2 CO2 + 2 H2O. It functions in the pathway porphyrin-containing compound metabolism; protoporphyrin-IX biosynthesis; protoporphyrinogen-IX from coproporphyrinogen-III (O2 route): step 1/1. Its function is as follows. Involved in the heme biosynthesis. Catalyzes the aerobic oxidative decarboxylation of propionate groups of rings A and B of coproporphyrinogen-III to yield the vinyl groups in protoporphyrinogen-IX. The sequence is that of Oxygen-dependent coproporphyrinogen-III oxidase from Ralstonia nicotianae (strain ATCC BAA-1114 / GMI1000) (Ralstonia solanacearum).